Here is a 381-residue protein sequence, read N- to C-terminus: Lipid-A-disaccharide synthase (381 aa).

Belongs to the LpxB family.

The enzyme catalyses a lipid X + a UDP-2-N,3-O-bis[(3R)-3-hydroxyacyl]-alpha-D-glucosamine = a lipid A disaccharide + UDP + H(+). It participates in bacterial outer membrane biogenesis; LPS lipid A biosynthesis. Condensation of UDP-2,3-diacylglucosamine and 2,3-diacylglucosamine-1-phosphate to form lipid A disaccharide, a precursor of lipid A, a phosphorylated glycolipid that anchors the lipopolysaccharide to the outer membrane of the cell. This is Lipid-A-disaccharide synthase from Psychromonas ingrahamii (strain DSM 17664 / CCUG 51855 / 37).